A 183-amino-acid polypeptide reads, in one-letter code: Hypoxanthine-guanine-xanthine phosphoribosyltransferase (183 aa).

GMP-binding positions include 102 to 110 (EDIIDTGLT), lysine 134, and aspartate 163. The active-site Proton acceptor is the aspartate 106. Aspartate 163 is a Mg(2+) binding site.

Homodimer. It depends on Mg(2+) as a cofactor.

The protein resides in the cytoplasm. It catalyses the reaction IMP + diphosphate = hypoxanthine + 5-phospho-alpha-D-ribose 1-diphosphate. The catalysed reaction is GMP + diphosphate = guanine + 5-phospho-alpha-D-ribose 1-diphosphate. The enzyme catalyses XMP + diphosphate = xanthine + 5-phospho-alpha-D-ribose 1-diphosphate. The protein operates within purine metabolism; GMP biosynthesis via salvage pathway; GMP from guanine: step 1/1. It participates in purine metabolism; IMP biosynthesis via salvage pathway; IMP from hypoxanthine: step 1/1. Its pathway is purine metabolism; XMP biosynthesis via salvage pathway; XMP from xanthine: step 1/1. In terms of biological role, essential in nucleic acid metabolism of T.foetus because the parasite is unable to synthesize purine nucleotides de novo and relies on the HGXPRTase activities for its purine requirements by salvaging purine bases from the host. Works with guanine, hypoxanthine and xanthine. The polypeptide is Hypoxanthine-guanine-xanthine phosphoribosyltransferase (HPT) (Tritrichomonas foetus (Trichomonas foetus)).